The following is a 909-amino-acid chain: Ribosome-releasing factor 2, mitochondrial (909 aa).

Residues 1–15 constitute a mitochondrion transit peptide; sequence MVAAPLLRAHQAARL. Positions 57-367 constitute a tr-type G domain; sequence DRTRNIGIIA…AVTNLLPSPP (311 aa). Residue 66-73 participates in GTP binding; the sequence is AHIDAGKT. The interval 121-148 is disordered; it reads WPPQTAGDGNTTPQEPQTPRSASSHTVN. Over residues 127-148 the composition is skewed to polar residues; sequence GDGNTTPQEPQTPRSASSHTVN. GTP-binding positions include 151-155 and 205-208; these read DTPGH and NKLD.

Belongs to the TRAFAC class translation factor GTPase superfamily. Classic translation factor GTPase family. EF-G/EF-2 subfamily.

The protein resides in the mitochondrion. Its function is as follows. Mitochondrial GTPase that mediates the disassembly of ribosomes from messenger RNA at the termination of mitochondrial protein biosynthesis. Not involved in the GTP-dependent ribosomal translocation step during translation elongation. The chain is Ribosome-releasing factor 2, mitochondrial (mef2) from Aspergillus flavus (strain ATCC 200026 / FGSC A1120 / IAM 13836 / NRRL 3357 / JCM 12722 / SRRC 167).